Reading from the N-terminus, the 196-residue chain is MHAQNVDIAPGSTSTVSIIVGIDPGLESTGYGVIEAGGGSLRCLTYGVIVTQSNQPSAARLRHIFDTLQQVISIYQPQYCAVETIYFAKNVTSALCVAQARGVVLLAMAQQHISVAEYAPNAIKKAITGIAQAEKRQVQHLVKILLNLKDIPHPDHAADALAVAVTHVHCCMSSNYAVGSTRSRGAYVTLYKKGKR.

Residues D23, E83, and H156 contribute to the active site. Mg(2+) contacts are provided by D23, E83, and H156.

The protein belongs to the RuvC family. As to quaternary structure, homodimer which binds Holliday junction (HJ) DNA. The HJ becomes 2-fold symmetrical on binding to RuvC with unstacked arms; it has a different conformation from HJ DNA in complex with RuvA. In the full resolvosome a probable DNA-RuvA(4)-RuvB(12)-RuvC(2) complex forms which resolves the HJ. Requires Mg(2+) as cofactor.

The protein localises to the cytoplasm. The enzyme catalyses Endonucleolytic cleavage at a junction such as a reciprocal single-stranded crossover between two homologous DNA duplexes (Holliday junction).. The RuvA-RuvB-RuvC complex processes Holliday junction (HJ) DNA during genetic recombination and DNA repair. Endonuclease that resolves HJ intermediates. Cleaves cruciform DNA by making single-stranded nicks across the HJ at symmetrical positions within the homologous arms, yielding a 5'-phosphate and a 3'-hydroxyl group; requires a central core of homology in the junction. The consensus cleavage sequence is 5'-(A/T)TT(C/G)-3'. Cleavage occurs on the 3'-side of the TT dinucleotide at the point of strand exchange. HJ branch migration catalyzed by RuvA-RuvB allows RuvC to scan DNA until it finds its consensus sequence, where it cleaves and resolves the cruciform DNA. The polypeptide is Crossover junction endodeoxyribonuclease RuvC (Treponema pallidum (strain Nichols)).